The primary structure comprises 152 residues: SUZ RNA-binding domain-containing (152 aa).

An N-acetylmethionine modification is found at Met-1. Residues 30–152 are disordered; sequence TQKESRKSKS…DGSQGFKQRR (123 aa). Ser-37, Ser-39, and Ser-51 each carry phosphoserine. The region spanning 42–107 is the SUZ domain; the sequence is KVPIVIQDDS…ARRRILGSAS (66 aa). The segment covering 66–80 has biased composition (polar residues); the sequence is PTSNGVVSSPNSTSR. The segment covering 89–100 has biased composition (basic and acidic residues); that stretch reads AQREAEYAEARR. Residues Ser-105 and Ser-107 each carry the phosphoserine modification. One can recognise an SUZ-C domain in the interval 111–152; the sequence is EQEKPILDRPTRISQPEDSRQPSNVIRQPLGPDGSQGFKQRR. Positions 113-130 are enriched in basic and acidic residues; the sequence is EKPILDRPTRISQPEDSR.

Belongs to the SZRD1 family.

The protein is SUZ RNA-binding domain-containing (Szrd1) of Mus musculus (Mouse).